The following is a 136-amino-acid chain: Nucleoside diphosphate kinase (136 aa).

ATP-binding residues include Lys-10, Phe-58, Arg-86, Thr-92, Arg-104, and Asn-114. Catalysis depends on His-117, which acts as the Pros-phosphohistidine intermediate.

It belongs to the NDK family. In terms of assembly, homotetramer. It depends on Mg(2+) as a cofactor.

Its subcellular location is the cytoplasm. The enzyme catalyses a 2'-deoxyribonucleoside 5'-diphosphate + ATP = a 2'-deoxyribonucleoside 5'-triphosphate + ADP. The catalysed reaction is a ribonucleoside 5'-diphosphate + ATP = a ribonucleoside 5'-triphosphate + ADP. Its function is as follows. Major role in the synthesis of nucleoside triphosphates other than ATP. The ATP gamma phosphate is transferred to the NDP beta phosphate via a ping-pong mechanism, using a phosphorylated active-site intermediate. The sequence is that of Nucleoside diphosphate kinase from Mycobacterium ulcerans (strain Agy99).